The sequence spans 342 residues: Heparan sulfate glucosamine 3-O-sulfotransferase 6 (342 aa).

A disordered region spans residues 1 to 21 (MAGSGGLGGGAGGGQGAGAGQ). Residues 1–31 (MAGSGGLGGGAGGGQGAGAGQGAALRASRAP) lie on the Cytoplasmic side of the membrane. A helical; Signal-anchor for type II membrane protein membrane pass occupies residues 32–49 (MLLVALVLGAYCLCALPG). Residues 50–342 (RCPPAARAPA…QMTGQDFGWG (293 aa)) lie on the Lumenal side of the membrane. A disordered region spans residues 55 to 85 (ARAPAPAPAPSEPSSSVHRPGAPGLPLASGP). Residues 66–85 (EPSSSVHRPGAPGLPLASGP) show a composition bias toward low complexity. A 3'-phosphoadenylyl sulfate-binding site is contributed by 100-104 (KGGTR). Residues 122 to 128 (EPHFFDR) and 153 to 156 (KTPS) each bind substrate. The 3'-phosphoadenylyl sulfate site is built by R181 and S189. Residue 220-221 (WS) coordinates substrate. N281 carries an N-linked (GlcNAc...) asparagine glycan. An intrachain disulfide couples C288 to C300. Residue 305–309 (KGRPH) coordinates 3'-phosphoadenylyl sulfate.

This sequence belongs to the sulfotransferase 1 family.

The protein resides in the golgi apparatus membrane. It catalyses the reaction alpha-D-glucosaminyl-[heparan sulfate](n) + 3'-phosphoadenylyl sulfate = 3-sulfo-alpha-D-glucosaminyl-[heparan sulfate](n) + adenosine 3',5'-bisphosphate + H(+). Sulfotransferase that utilizes 3'-phospho-5'-adenylyl sulfate (PAPS) to catalyze the transfer of a sulfo group to heparan sulfate. The substrate-specific O-sulfation generates an enzyme-modified heparan sulfate which acts as a binding receptor to Herpes Simplex Virus-1 (HSV-1) and permits its entry. Unlike 3-OST-1, does not convert non-anticoagulant heparan sulfate to anticoagulant heparan sulfate. This is Heparan sulfate glucosamine 3-O-sulfotransferase 6 (HS3ST6) from Homo sapiens (Human).